The primary structure comprises 287 residues: ATP synthase gamma chain (287 aa).

This sequence belongs to the ATPase gamma chain family. F-type ATPases have 2 components, CF(1) - the catalytic core - and CF(0) - the membrane proton channel. CF(1) has five subunits: alpha(3), beta(3), gamma(1), delta(1), epsilon(1). CF(0) has three main subunits: a, b and c.

The protein resides in the cell inner membrane. Its function is as follows. Produces ATP from ADP in the presence of a proton gradient across the membrane. The gamma chain is believed to be important in regulating ATPase activity and the flow of protons through the CF(0) complex. The chain is ATP synthase gamma chain from Photorhabdus laumondii subsp. laumondii (strain DSM 15139 / CIP 105565 / TT01) (Photorhabdus luminescens subsp. laumondii).